A 173-amino-acid polypeptide reads, in one-letter code: Ribulose bisphosphate carboxylase small subunit, chloroplastic 7 (173 aa).

Residues 1–49 (MASIPATVATVAQANMVAPFTGLKSNAAFPVTKKVNDFSTLASNGGRVQ) constitute a chloroplast transit peptide.

It belongs to the RuBisCO small chain family. Heterohexadecamer of 8 large and 8 small subunits.

Its subcellular location is the plastid. It is found in the chloroplast. RuBisCO catalyzes two reactions: the carboxylation of D-ribulose 1,5-bisphosphate, the primary event in carbon dioxide fixation, as well as the oxidative fragmentation of the pentose substrate. Both reactions occur simultaneously and in competition at the same active site. Although the small subunit is not catalytic it is essential for maximal activity. The protein is Ribulose bisphosphate carboxylase small subunit, chloroplastic 7 of Flaveria pringlei.